The following is a 69-amino-acid chain: Bacteriocin microcin B17 (69 aa).

The propeptide occupies 1–26 (MELKASEFGVVLSVDALKLSRQSPLG). A cross-link (oxazole-4-carboxylic acid (Gly-Ser)) is located at residues 39–40 (GS). The thiazole-4-carboxylic acid (Ser-Cys) cross-link spans 40 to 41 (SC). Cross-links (thiazole-4-carboxylic acid (Gly-Cys)) lie at residues 47 to 48 (GC), 50 to 51 (GC), and 54 to 55 (GC). The segment at residues 55 to 56 (CS) is a cross-link (oxazole-4-carboxylic acid (Cys-Ser)). 2 consecutive cross-links (oxazole-4-carboxylic acid (Gly-Ser)) follow at residues 61 to 62 (GS) and 64 to 65 (GS).

In terms of processing, the processed N-terminus does not resemble a typical secretion signal sequence. Maturation of thiazole and oxazole containing antibiotics involves the enzymatic condensation of a Cys, Ser or Thr with the alpha-carbonyl of the preceding amino acid to form a thioether or ether bond, then dehydration to form a double bond with the alpha-amino nitrogen. Thiazoline or oxazoline rings are dehydrogenated to form thiazole or oxazole rings.

Functionally, this glycine-rich peptide antibiotic inhibits DNA replication in many enteric bacteria, that leads to induction of the SOS repair system, massive DNA degradation and cell death. B17 inhibits type II topoisomerase by trapping an enzyme - DNA cleavable complex. The sequence is that of Bacteriocin microcin B17 (mcbA) from Escherichia coli.